Reading from the N-terminus, the 470-residue chain is Glutamate--tRNA ligase (470 aa).

A 'HIGH' region motif is present at residues 12 to 22 (PSPTGIFHVGG). 4 residues coordinate Zn(2+): cysteine 103, cysteine 105, cysteine 125, and aspartate 127. A 'KMSKS' region motif is present at residues 236 to 240 (KLSKR). ATP is bound at residue lysine 239.

Belongs to the class-I aminoacyl-tRNA synthetase family. Glutamate--tRNA ligase type 1 subfamily. As to quaternary structure, monomer. It depends on Zn(2+) as a cofactor.

The protein resides in the cytoplasm. It carries out the reaction tRNA(Glu) + L-glutamate + ATP = L-glutamyl-tRNA(Glu) + AMP + diphosphate. Catalyzes the attachment of glutamate to tRNA(Glu) in a two-step reaction: glutamate is first activated by ATP to form Glu-AMP and then transferred to the acceptor end of tRNA(Glu). This chain is Glutamate--tRNA ligase, found in Frankia casuarinae (strain DSM 45818 / CECT 9043 / HFP020203 / CcI3).